The chain runs to 331 residues: Probable tRNA pseudouridine synthase B (331 aa).

A compositionally biased stretch (basic and acidic residues) spans 1–15 (MRCSQREVFVKREEP). The disordered stretch occupies residues 1-27 (MRCSQREVFVKREEPTNPEWGKPPSQR). Residue D71 is the Nucleophile of the active site. The 76-residue stretch at 238–313 (LPKIWVRDSA…AVVRTDRVVM (76 aa)) folds into the PUA domain.

The protein belongs to the pseudouridine synthase TruB family. Type 2 subfamily.

The catalysed reaction is uridine(55) in tRNA = pseudouridine(55) in tRNA. Its function is as follows. Could be responsible for synthesis of pseudouridine from uracil-55 in the psi GC loop of transfer RNAs. The sequence is that of Probable tRNA pseudouridine synthase B from Pyrobaculum arsenaticum (strain DSM 13514 / JCM 11321 / PZ6).